Reading from the N-terminus, the 29-residue chain is Ceratotoxin-B (29 aa).

Homomer of four to six subunits.

It localises to the secreted. Functionally, female-specific peptides with potent activity against Gram-positive and Gram-negative bacteria. They have as well hemolytic activity. The protein is Ceratotoxin-B (CTXB) of Ceratitis capitata (Mediterranean fruit fly).